The chain runs to 770 residues: Pheromone-regulated membrane protein 10 (770 aa).

2 disordered regions span residues 1–125 (MDGR…DGDD) and 139–169 (NQGGLVPGLAPIPSENENGKDDIEKNNRNEE). Polar residues-rich tracts occupy residues 49–63 (SGKSISDLGISNNDN) and 78–93 (DLSSRSTETSDNSKGT). Over residues 155–169 (ENGKDDIEKNNRNEE) the composition is skewed to basic and acidic residues. Transmembrane regions (helical) follow at residues 453-473 (WMCVLLYAFCSAMVTPYAFGG), 475-495 (WVNLAISFFMGLCVGSLQFIL), 505-525 (VFEISASIVVSFCGRAFGSIP), 529-549 (ICFGAVTQGSLALILPGYIIL), 568-588 (FYAIIYSLFLGFGITLGSALF), 604-624 (LISPWFRFLFVPAFTISISLL), 629-649 (ISQLPVMVFISCTGYVVTYWA), 659-679 (FTAALAAFVIGVLGNLYSRIW), 681-701 (GLAVSAMLPAIFVQVPSGIAS), and 740-760 (IQVCVGISVGLFASSLFVYPF).

Belongs to the ThrE exporter (TC 2.A.79) family.

Its subcellular location is the membrane. This is Pheromone-regulated membrane protein 10 (PRM10) from Saccharomyces cerevisiae (strain YJM789) (Baker's yeast).